We begin with the raw amino-acid sequence, 137 residues long: Nucleoside diphosphate kinase (137 aa).

Lysine 11, phenylalanine 59, arginine 87, threonine 93, arginine 104, and asparagine 114 together coordinate ATP. The Pros-phosphohistidine intermediate role is filled by histidine 117.

This sequence belongs to the NDK family. In terms of assembly, homotetramer. It depends on Mg(2+) as a cofactor.

It localises to the cytoplasm. It carries out the reaction a 2'-deoxyribonucleoside 5'-diphosphate + ATP = a 2'-deoxyribonucleoside 5'-triphosphate + ADP. The enzyme catalyses a ribonucleoside 5'-diphosphate + ATP = a ribonucleoside 5'-triphosphate + ADP. Its function is as follows. Major role in the synthesis of nucleoside triphosphates other than ATP. The ATP gamma phosphate is transferred to the NDP beta phosphate via a ping-pong mechanism, using a phosphorylated active-site intermediate. This chain is Nucleoside diphosphate kinase, found in Frankia alni (strain DSM 45986 / CECT 9034 / ACN14a).